A 522-amino-acid chain; its full sequence is Peptide methionine sulfoxide reductase MsrA/MsrB (522 aa).

The Thioredoxin domain occupies 17–174 (LALGACSPKI…ALALIRNPNA (158 aa)). C68 and C71 are disulfide-bonded. The tract at residues 199 to 354 (RTIYLAGGCF…PNGYCHIDIR (156 aa)) is peptide methionine sulfoxide reductase A. The active site involves C207. Positions 383–506 (DAELKRTLTE…NGASLKFIPL (124 aa)) constitute a MsrB domain. Cysteines 440 and 495 form a disulfide. C495 (nucleophile) is an active-site residue.

This sequence in the N-terminal section; belongs to the thioredoxin family. In the central section; belongs to the MsrA Met sulfoxide reductase family. It in the C-terminal section; belongs to the MsrB Met sulfoxide reductase family.

It catalyses the reaction L-methionyl-[protein] + [thioredoxin]-disulfide + H2O = L-methionyl-(S)-S-oxide-[protein] + [thioredoxin]-dithiol. The catalysed reaction is [thioredoxin]-disulfide + L-methionine + H2O = L-methionine (S)-S-oxide + [thioredoxin]-dithiol. It carries out the reaction L-methionyl-[protein] + [thioredoxin]-disulfide + H2O = L-methionyl-(R)-S-oxide-[protein] + [thioredoxin]-dithiol. Functionally, has an important function as a repair enzyme for proteins that have been inactivated by oxidation. Catalyzes the reversible oxidation-reduction of methionine sulfoxide in proteins to methionine. In Neisseria gonorrhoeae, this protein is Peptide methionine sulfoxide reductase MsrA/MsrB (msrAB).